A 605-amino-acid polypeptide reads, in one-letter code: Replication and transcription activator (605 aa).

2 disordered regions span residues 307–380 and 447–499; these read SLPS…AEPE and RIRP…AVTP. The segment covering 321–338 has biased composition (low complexity); that stretch reads SADCGDSSSSSSDSGNSD. Positions 341–353 are enriched in basic and acidic residues; the sequence is QSEREEARAEAPR. Basic residues predominate over residues 355 to 364; it reads RAPKSRRTSR.

This sequence belongs to the herpesviridae Rta family. As to quaternary structure, interacts with human ATF7IP protein, leading to promote and regulate host genes in virus-infected cells. Interacts with RNA polymerase III complex; this interaction downregulates small RNA transcription and 5'-pppRNA production.

The protein resides in the host nucleus. The protein localises to the virion tegument. Functionally, immediate-early transcription factor that controls the initiation of viral lytic gene expression and lytic reactivation from latency. Triggers lytic replication, and initiates a cellular senescence program in epithelial cells. Up-regulates human DCR3/TNFRSF6B by directly binding to its receptor. Globally induces a proteasome-dependent loss of SUMOylated proteins in the host cell and the loss of promeylocytic leukemia nuclear bodies. Improves the stability of the triplex capsid protein TRX1 by reducing the ubiquitination level of the latter. Mediates evasion of inflammasome activation and antiviral responses (T- and NK cell activation) during EBV early lytic infection. This chain is Replication and transcription activator, found in Epstein-Barr virus (strain B95-8) (HHV-4).